A 435-amino-acid polypeptide reads, in one-letter code: tRNA modification GTPase MnmE (435 aa).

3 residues coordinate (6S)-5-formyl-5,6,7,8-tetrahydrofolate: Arg-24, Glu-82, and Lys-122. Residues 219–360 (GFIIAIAGPP…LIAEMERRLG (142 aa)) form the TrmE-type G domain. Asn-229 serves as a coordination point for K(+). Residues 229-234 (NAGKST), 248-254 (SPVPGTT), and 273-276 (DTAG) each bind GTP. Ser-233 contacts Mg(2+). 3 residues coordinate K(+): Ser-248, Val-250, and Thr-253. Thr-254 contributes to the Mg(2+) binding site. Lys-435 is a (6S)-5-formyl-5,6,7,8-tetrahydrofolate binding site.

Belongs to the TRAFAC class TrmE-Era-EngA-EngB-Septin-like GTPase superfamily. TrmE GTPase family. As to quaternary structure, homodimer. Heterotetramer of two MnmE and two MnmG subunits. It depends on K(+) as a cofactor.

It is found in the cytoplasm. Functionally, exhibits a very high intrinsic GTPase hydrolysis rate. Involved in the addition of a carboxymethylaminomethyl (cmnm) group at the wobble position (U34) of certain tRNAs, forming tRNA-cmnm(5)s(2)U34. The chain is tRNA modification GTPase MnmE from Azorhizobium caulinodans (strain ATCC 43989 / DSM 5975 / JCM 20966 / LMG 6465 / NBRC 14845 / NCIMB 13405 / ORS 571).